We begin with the raw amino-acid sequence, 167 residues long: Small ribosomal subunit protein uS5 (167 aa).

The 64-residue stretch at 12-75 folds into the S5 DRBM domain; it reads LNEKLIAVNR…EKARRNIRDV (64 aa).

It belongs to the universal ribosomal protein uS5 family. Part of the 30S ribosomal subunit. Contacts proteins S4 and S8.

In terms of biological role, with S4 and S12 plays an important role in translational accuracy. Located at the back of the 30S subunit body where it stabilizes the conformation of the head with respect to the body. This is Small ribosomal subunit protein uS5 from Psychromonas ingrahamii (strain DSM 17664 / CCUG 51855 / 37).